We begin with the raw amino-acid sequence, 346 residues long: Calcium homeostasis modulator protein 1 (346 aa).

Residues 1–21 (MMDKFRMIFQFLQSNQESFMN) are Cytoplasmic-facing. The central pore stretch occupies residues 10–37 (QFLQSNQESFMNGICGIMALASAQMYSA). A helical membrane pass occupies residues 22–37 (GICGIMALASAQMYSA). The Extracellular segment spans residues 38–49 (FDFNCPCLPGYN). 2 disulfide bridges follow: cysteine 42–cysteine 127 and cysteine 44–cysteine 161. The helical transmembrane segment at 50–72 (AAYSAGILLAPPLVLFLLGLVMN) threads the bilayer. The tract at residues 63 to 70 (VLFLLGLV) is phospholipid-binding. Residues 73–99 (NNVSMLAEEWKRPLGRRAKDPAVLRYM) lie on the Cytoplasmic side of the membrane. A helical transmembrane segment spans residues 100–125 (FCSMAQRALIAPVVWVAVTLLDGKCF). Cysteine 101 carries the S-palmitoyl cysteine lipid modification. The tract at residues 105–117 (QRALIAPVVWVAV) is phospholipid-binding. The Extracellular portion of the chain corresponds to 126-180 (LCAFCTAVPVSALGNGSLAPGLPAPELARLLARVPCPEIYDGDWLLAREVAVRYL). N-linked (GlcNAc...) asparagine glycosylation occurs at asparagine 140. The helical transmembrane segment at 181 to 206 (RCISQALGWSFVLLTTLLAFVVRSVR) threads the bilayer. Positions 192-202 (VLLTTLLAFVV) are phospholipid-binding. At 207–346 (PCFTQAAFLK…KEVATYFSKV (140 aa)) the chain is on the cytoplasmic side. Cysteine 208 carries S-palmitoyl cysteine lipidation. A disordered region spans residues 313–346 (LRLGQEEPPLMGNGWAGGGPRPPRKEVATYFSKV).

Belongs to the CALHM family. In terms of assembly, oligomerizes to form hexamers and octamers. Does not form gap junctions. Associates with CALHM3 as a pore-forming subunit in a hetero-hexameric channel complex. In terms of processing, N-glycosylated. Assembly with CALHM3 is associated with N-glycan remodeling and formation of hybrid complex- and high mannose-type glycochains. This N-glycan processing regulates channel trafficking and gating kinetics. Palmitoylated by ZDHHC3, ZDHHC20 and possibly ZDHHC7. Palmitoylation regulates voltage-dependent gating of the channel by shifting it toward more depolarized potentials. In terms of tissue distribution, predominantly expressed in adult brain. Detected also in retinoic acid-differentiated SH-SY5Y cells. Specifically expressed in circumvallate taste bud cells.

The protein localises to the cell membrane. It localises to the endoplasmic reticulum membrane. The protein resides in the basolateral cell membrane. The enzyme catalyses ATP(in) = ATP(out). It catalyses the reaction Ca(2+)(in) = Ca(2+)(out). The catalysed reaction is Mg(2+)(in) = Mg(2+)(out). It carries out the reaction Na(+)(in) = Na(+)(out). The enzyme catalyses K(+)(in) = K(+)(out). It catalyses the reaction Li(+)(in) = Li(+)(out). The catalysed reaction is Rb(+)(in) = Rb(+)(out). It carries out the reaction Cs(+)(in) = Cs(+)(out). The enzyme catalyses chloride(in) = chloride(out). Its activity is regulated as follows. Regulated by membrane voltage and extracellular Ca(2+). Inhibited by Gd(3+), ruthenium red, and Zn(2+) and partially inhibited by 2-aminoethoxydiphenyl borate. Functionally, pore-forming subunit of gustatory voltage-gated ion channels required for sensory perception of sweet, bitter and umami tastes. With CALHM3 forms a fast-activating voltage-gated ATP-release channel in type II taste bud cells, ATP acting as a neurotransmitter to activate afferent neural gustatory pathways. Acts both as a voltage-gated and calcium-activated ion channel: mediates neuronal excitability in response to membrane depolarization and low extracellular Ca(2+) concentration. Has poor ion selectivity and forms a wide pore (around 14 Angstroms) that mediates permeation of small ions including Ca(2+), Na(+), K(+) and Cl(-), as well as larger ions such as ATP(4-). Mediates Ca(2+) influx and downstream activation of the ERK1 and ERK2 cascade in neurons. Triggers endoplasmic reticulum stress by reducing the Ca(2+) content of the endoplasmic reticulum. May indirectly control amyloid precursor protein (APP) proteolysis and aggregated amyloid-beta (Abeta) peptides levels in a Ca(2+)-dependent manner. This chain is Calcium homeostasis modulator protein 1, found in Homo sapiens (Human).